The sequence spans 434 residues: tRNA modification GTPase MnmE (434 aa).

Positions 20, 79, and 119 each coordinate (6S)-5-formyl-5,6,7,8-tetrahydrofolate. One can recognise a TrmE-type G domain in the interval 219–361 (GLRVVLAGRP…LQEKLVEIGK (143 aa)). GTP contacts are provided by residues 229-234 (NAGKST), 248-254 (APIAGTT), and 273-276 (DTAG). The Mg(2+) site is built by Ser-233 and Thr-254. Lys-434 contacts (6S)-5-formyl-5,6,7,8-tetrahydrofolate.

This sequence belongs to the TRAFAC class TrmE-Era-EngA-EngB-Septin-like GTPase superfamily. TrmE GTPase family. Homodimer. Heterotetramer of two MnmE and two MnmG subunits. K(+) is required as a cofactor.

Its subcellular location is the cytoplasm. Functionally, exhibits a very high intrinsic GTPase hydrolysis rate. Involved in the addition of a carboxymethylaminomethyl (cmnm) group at the wobble position (U34) of certain tRNAs, forming tRNA-cmnm(5)s(2)U34. The polypeptide is tRNA modification GTPase MnmE (Zymomonas mobilis subsp. mobilis (strain ATCC 31821 / ZM4 / CP4)).